Consider the following 218-residue polypeptide: MHSSTHDDLVILGGTFDPIHYGHLRAVEEVRQALAIAQAMLIPAGHPPHRKSPWADARHRLAMTRIAVAHHPQFTVSSWEVEREGPSYTVDTLTALRQQRPDAVLAMVIGMDAFLRFDTWHHWQHILDLTHLVVTGRPGWPAAELPEALRQALYQRRCEDVDALRQTPAGCILFHTVTALEISASNIRSLLAGHQSPRFLLPDEVLDYIDAEGLYQSP.

It belongs to the NadD family.

The catalysed reaction is nicotinate beta-D-ribonucleotide + ATP + H(+) = deamido-NAD(+) + diphosphate. Its pathway is cofactor biosynthesis; NAD(+) biosynthesis; deamido-NAD(+) from nicotinate D-ribonucleotide: step 1/1. In terms of biological role, catalyzes the reversible adenylation of nicotinate mononucleotide (NaMN) to nicotinic acid adenine dinucleotide (NaAD). This is Probable nicotinate-nucleotide adenylyltransferase from Acidithiobacillus ferrooxidans (strain ATCC 23270 / DSM 14882 / CIP 104768 / NCIMB 8455) (Ferrobacillus ferrooxidans (strain ATCC 23270)).